Consider the following 232-residue polypeptide: Dof zinc finger protein DOF4.3 (232 aa).

A Dof-type zinc finger spans residues 25 to 79 (RVCARCDSDNTKFCYYNNYSEFQPRYFCKNCRRYWTHGGALRNVPIGGSSRAKRT). Residues cysteine 27, cysteine 30, cysteine 52, and cysteine 55 each contribute to the Zn(2+) site.

Its subcellular location is the nucleus. In terms of biological role, transcription factor that binds specifically to a 5'-AA[AG]G-3' consensus core sequence. The protein is Dof zinc finger protein DOF4.3 (DOF4.3) of Arabidopsis thaliana (Mouse-ear cress).